A 329-amino-acid polypeptide reads, in one-letter code: Replication factor C small subunit 1 (329 aa).

44–51 (GPPGTGKT) contacts ATP.

Belongs to the activator 1 small subunits family. RfcS subfamily. Heteromultimer composed of small subunits (RfcS) and large subunits (RfcL).

Part of the RFC clamp loader complex which loads the PCNA sliding clamp onto DNA. The polypeptide is Replication factor C small subunit 1 (Pyrobaculum islandicum (strain DSM 4184 / JCM 9189 / GEO3)).